The following is a 141-amino-acid chain: Endoribonuclease YbeY (141 aa).

Positions 100, 104, and 110 each coordinate Zn(2+).

Belongs to the endoribonuclease YbeY family. Requires Zn(2+) as cofactor.

It is found in the cytoplasm. In terms of biological role, single strand-specific metallo-endoribonuclease involved in late-stage 70S ribosome quality control and in maturation of the 3' terminus of the 16S rRNA. This chain is Endoribonuclease YbeY, found in Helicobacter pylori (strain J99 / ATCC 700824) (Campylobacter pylori J99).